Reading from the N-terminus, the 371-residue chain is Probable F-box protein At1g65740 (371 aa).

The 48-residue stretch at 2–49 folds into the F-box domain; it reads VDWSTLPEELLHFIAARSFSLVEYKRFSSICVSWHSSVSGVKKNPFHR.

In Arabidopsis thaliana (Mouse-ear cress), this protein is Probable F-box protein At1g65740.